We begin with the raw amino-acid sequence, 499 residues long: uncharacterized protein (499 aa).

Disordered regions lie at residues glutamine 76 to proline 118 and aspartate 208 to asparagine 268. Positions aspartate 87–arginine 104 are enriched in basic and acidic residues. Residues aspartate 208 to leucine 263 are compositionally biased toward acidic residues. Position 355 is a phosphoserine (serine 355). Residues alanine 478 to lysine 499 are disordered. Polar residues predominate over residues lysine 489–lysine 499.

This is an uncharacterized protein from Arabidopsis thaliana (Mouse-ear cress).